Here is a 173-residue protein sequence, read N- to C-terminus: Putative metal-dependent hydrolase BA_2700/GBAA_2700/BAS2515 (173 aa).

Zn(2+)-binding residues include His-65, His-156, and His-160.

Belongs to the metal hydrolase YfiT family. As to quaternary structure, homodimer. Zn(2+) is required as a cofactor.

The protein resides in the cytoplasm. Functionally, possible metal-dependent hydrolase. In Bacillus anthracis, this protein is Putative metal-dependent hydrolase BA_2700/GBAA_2700/BAS2515.